We begin with the raw amino-acid sequence, 379 residues long: Class V chitinase (379 aa).

A signal peptide spans 1 to 24; that stretch reads MSSTKLISLIVSITFFLTLQCSMA. Positions 27-369 constitute a GH18 domain; that stretch reads VVKASYWFPA…RAASQAWDAT (343 aa). G99 serves as a coordination point for chitin. The Proton donor role is filled by E140. Y259 provides a ligand contact to chitin. N-linked (GlcNAc...) asparagine glycosylation is found at N307 and N327. Residue W348 participates in chitin binding.

Belongs to the glycosyl hydrolase 18 family. Chitinase class V subfamily.

The catalysed reaction is Random endo-hydrolysis of N-acetyl-beta-D-glucosaminide (1-&gt;4)-beta-linkages in chitin and chitodextrins.. It catalyses the reaction Hydrolysis of N,N'-diacetylchitobiose from the non-reducing end of chitin and chitodextrins.. Its pathway is glycan degradation; chitin degradation. In terms of biological role, can hydrolyze glycol chitin and chitin oligosaccharides (e.g. N-acetylglucosamine) (GlcNAc)4, (GlcNAc)5 and (GlcNAc)6. Hydrolyzes N-acetylglucosamine oligomers producing dimers from the non-reducing end of the substrates. The polypeptide is Class V chitinase (Arabidopsis thaliana (Mouse-ear cress)).